A 249-amino-acid polypeptide reads, in one-letter code: RNA-free ribonuclease P (249 aa).

A disordered region spans residues 226-249 (NENEPEYENRDKSKEGSSGEIEFI). Positions 232–242 (YENRDKSKEGS) are enriched in basic and acidic residues.

The protein belongs to the HARP family.

The enzyme catalyses Endonucleolytic cleavage of RNA, removing 5'-extranucleotides from tRNA precursor.. Functionally, RNA-free RNase P that catalyzes the removal of the 5'-leader sequence from pre-tRNA to produce the mature 5'-terminus. The protein is RNA-free ribonuclease P of Methanosarcina barkeri (strain Fusaro / DSM 804).